The sequence spans 931 residues: Myelin regulatory factor homolog 1 (931 aa).

Over 1 to 658 (MSSSDLLKGE…SCGSRLSQGT (658 aa)) the chain is Cytoplasmic. Positions 29 to 143 (TDEDDGSMVS…QQHQQTRGGN (115 aa)) are disordered. The span at 37-52 (VSPTSSADSMHQNLGV) shows a compositional bias: polar residues. Positions 53 to 68 (QQQQQQMLQAQQRQNQ) are enriched in low complexity. Residues 117-126 (DNGNQTMNNI) show a composition bias toward polar residues. Over residues 127–138 (QSQQLSQQQHQQ) the composition is skewed to low complexity. A DNA-binding region (NDT80) is located at residues 169–436 (GTAAVNQPTN…TNPGSFEPQD (268 aa)). The Peptidase S74 domain maps to 483–582 (SDIRLKEAIT…RMTGDLDSKI (100 aa)). A helical transmembrane segment spans residues 659–679 (VVTLVSIMAACLLAMSALYVL). The Lumenal portion of the chain corresponds to 680 to 931 (DWHNRNYGYH…FYRMCTLSSS (252 aa)). N-linked (GlcNAc...) asparagine glycans are attached at residues Asn-797 and Asn-912.

It belongs to the MRF family. Homotrimer. Interacts with myrf-2. Interacts (via C-terminus) with pan-1 (via LRR regions); the interaction promotes the role of myrf-1 in the synaptic remodeling of DD GABAergic motor neurons at the cell membrane. Post-translationally, myelin regulatory factor: Follows autocatalytic cleavage via the peptidase S74 domain. Autoprocessing is apparently constitutive and is essential for transcriptional activity. As to expression, widely expressed in many tissues, including neuronal, muscle and epidermal stem cells. In neurons, expressed in dorsal D (DD) GABAergic motor neurons.

The protein localises to the endoplasmic reticulum membrane. It localises to the nucleus. The protein resides in the apical cell membrane. Its subcellular location is the cytoplasm. In terms of biological role, constitutes a precursor of the transcription factor. Mediates the autocatalytic cleavage that releases the Myelin regulatory factor homolog 1, N-terminal component that specifically activates transcription of genes involved in synaptic rewiring during nervous system maturation. Its function is as follows. Membrane-bound part that has no transcription factor activity and remains attached to the endoplasmic reticulum membrane following cleavage. Functionally, transcription factor that specifically activates expression of genes involved in synaptic rewiring during nervous system maturation. Specifically required for dorsal D (DD) GABAergic motor neurons synaptic rewiring. Acts in complex with myrf-2 paralog. In Caenorhabditis elegans, this protein is Myelin regulatory factor homolog 1.